The following is a 549-amino-acid chain: Glutamyl-tRNA(Gln) amidotransferase subunit B, chloroplastic/mitochondrial (549 aa).

It belongs to the GatB/GatE family. GatB subfamily. In terms of assembly, subunit of the heterotrimeric GatCAB amidotransferase (AdT) complex, composed of A, B and C subunits.

It is found in the mitochondrion. The protein localises to the plastid. The protein resides in the chloroplast. It carries out the reaction L-glutamyl-tRNA(Gln) + L-glutamine + ATP + H2O = L-glutaminyl-tRNA(Gln) + L-glutamate + ADP + phosphate + H(+). Functionally, allows the formation of correctly charged Gln-tRNA(Gln) through the transamidation of misacylated Glu-tRNA(Gln) in chloroplasts and mitochondria. The reaction takes place in the presence of glutamine and ATP through an activated gamma-phospho-Glu-tRNA(Gln). The protein is Glutamyl-tRNA(Gln) amidotransferase subunit B, chloroplastic/mitochondrial of Ricinus communis (Castor bean).